The chain runs to 21 residues: Histone H2B 1 (21 aa).

The interval 1–21 is disordered; it reads MPDPAKTAPKKGSKKAVTKXA. 2 positions are modified to N6-acetyllysine: Lys6 and Lys11. Positions 8-21 are enriched in basic residues; sequence APKKGSKKAVTKXA. A Phosphoserine modification is found at Ser13. Residues Lys14 and Lys19 each carry the N6-acetyllysine modification. Lys19 participates in a covalent cross-link: Glycyl lysine isopeptide (Lys-Gly) (interchain with G-Cter in ubiquitin).

This sequence belongs to the histone H2B family. As to quaternary structure, the nucleosome is a histone octamer containing two molecules each of H2A, H2B, H3 and H4 assembled in one H3-H4 heterotetramer and two H2A-H2B heterodimers. The octamer wraps approximately 147 bp of DNA. Post-translationally, monoubiquitination at the C-terminal Lys gives a specific tag for epigenetic transcriptional activation and is also prerequisite for histone H3 'Lys-4' and 'Lys-79' methylation. In terms of processing, phosphorylated during apoptosis; which facilitates apoptotic chromatin condensation.

It is found in the nucleus. Its subcellular location is the chromosome. Its function is as follows. Core component of nucleosome. Nucleosomes wrap and compact DNA into chromatin, limiting DNA accessibility to the cellular machineries which require DNA as a template. Histones thereby play a central role in transcription regulation, DNA repair, DNA replication and chromosomal stability. DNA accessibility is regulated via a complex set of post-translational modifications of histones, also called histone code, and nucleosome remodeling. In terms of biological role, has broad-spectrum antimicrobial and antibacterial activity. It is important in the antimicrobial defenses of fish skin and possesses strong activity against saprolegnia, the most common fungal infection in fish. It is also inhibitory to fish bacterial pathogens, such as aeromonas hydrophila, vibrio alginolyticus and E.coli D31. The polypeptide is Histone H2B 1 (Ictalurus punctatus (Channel catfish)).